Reading from the N-terminus, the 311-residue chain is 4-hydroxyproline 2-epimerase (311 aa).

The active-site Proton acceptor is Cys88. Substrate is bound by residues 89-90 (GH), His208, and Asp232. Cys236 functions as the Proton donor in the catalytic mechanism. A substrate-binding site is contributed by 237 to 238 (GT).

The protein belongs to the proline racemase family.

It carries out the reaction trans-4-hydroxy-L-proline = cis-4-hydroxy-D-proline. Its function is as follows. Catalyzes the epimerization of trans-4-hydroxy-L-proline (t4LHyp) to cis-4-hydroxy-D-proline (c4DHyp). Is likely involved in a degradation pathway that converts t4LHyp to alpha-ketoglutarate. Displays no proline racemase activity. This chain is 4-hydroxyproline 2-epimerase, found in Chromohalobacter salexigens (strain ATCC BAA-138 / DSM 3043 / CIP 106854 / NCIMB 13768 / 1H11).